A 683-amino-acid chain; its full sequence is Transforming growth factor-beta-induced protein ig-h3 (683 aa).

An N-terminal signal peptide occupies residues 1-23; it reads MALLGRLLPLALALALGPAATHA. Ser37 carries the phosphoserine modification. Positions 45–99 constitute an EMI domain; sequence GPNVCAVQKLIGTNKKYFTNCKQWYQRKICGKSTVISYECCPGYEKVPGEKGCPA. 5 cysteine pairs are disulfide-bonded: Cys49-Cys85, Cys74-Cys339, Cys84-Cys97, Cys214-Cys317, and Cys473-Cys478. Cys65 carries the post-translational modification S-cysteinyl cysteine. FAS1 domains are found at residues 103–236, 240–371, 375–498, and 502–632; these read LSNL…DKVI, TNNI…DELL, SAKT…DRML, and MGTV…NTVL. Positions 642 to 644 match the Cell attachment site motif; that stretch reads RGD.

In terms of assembly, binds to type I, II, and IV collagens. In terms of processing, gamma-carboxyglutamated; gamma-carboxyglutamate residues are formed by vitamin K dependent carboxylation; these residues may be required for binding to calcium. According to a report, does not contain any vitamin K-dependent gamma-carboxyglutamate residues. The EMI domain contains 2 expected intradomain disulfide bridges (Cys-49-Cys85 and Cys-84-Cys-97) and one unusual interdomain disulfide bridge to the second FAS1 domain (Cys-74-Cys-339). This arrangement violates the predicted disulfide bridge pattern of an EMI domain. In terms of tissue distribution, widely distributed in various tissues except for the brain. High levels in corneal epithelium.

Its subcellular location is the secreted. It localises to the extracellular space. The protein resides in the extracellular matrix. Its function is as follows. Plays a role in cell adhesion. May play a role in cell-collagen interactions. This is Transforming growth factor-beta-induced protein ig-h3 (TGFBI) from Sus scrofa (Pig).